We begin with the raw amino-acid sequence, 413 residues long: Chloramphenicol resistance protein CraA (413 aa).

A run of 12 helical transmembrane segments spans residues 18–38, 55–75, 84–104, 110–130, 147–167, 170–190, 228–248, 260–280, 289–309, 312–332, 349–369, and 373–393; these read LMFP…NDLI, WAPS…WLLG, KKVL…ILLT, FLTL…VGYA, LMAN…AFLI, VSWH…WVGL, ALPL…IILV, LAQF…IKII, VLIG…GVVW, YLIP…GISF, TVAA…IELV, and YTQF…ALWF.

This sequence belongs to the major facilitator superfamily.

It is found in the cell inner membrane. Efflux pump that mediates resistance to chloramphenicol. The polypeptide is Chloramphenicol resistance protein CraA (Acinetobacter baumannii (strain ATCC 19606 / DSM 30007 / JCM 6841 / CCUG 19606 / CIP 70.34 / NBRC 109757 / NCIMB 12457 / NCTC 12156 / 81)).